Here is a 412-residue protein sequence, read N- to C-terminus: Putative competence-damage inducible protein (412 aa).

This sequence belongs to the CinA family.

The sequence is that of Putative competence-damage inducible protein from Bacillus anthracis.